The chain runs to 100 residues: Ribosomal biogenesis factor (100 aa).

At serine 19 the chain carries Phosphoserine. Lysine 21 is modified (N6-acetyllysine). Serine 69 is subject to Phosphoserine.

Associates with the pre-60S ribosomal particles.

The protein localises to the nucleus. The protein resides in the nucleolus. In terms of biological role, trans-acting factor in ribosome biogenesis required for efficient 40S and 60S subunit production. This Bos taurus (Bovine) protein is Ribosomal biogenesis factor (RBIS).